Consider the following 509-residue polypeptide: Maturase K (509 aa).

This sequence belongs to the intron maturase 2 family. MatK subfamily.

The protein localises to the plastid. It is found in the chloroplast. In terms of biological role, usually encoded in the trnK tRNA gene intron. Probably assists in splicing its own and other chloroplast group II introns. This Banksia cuneata (Quairading banksia) protein is Maturase K.